An 863-amino-acid chain; its full sequence is Leucine--tRNA ligase (863 aa).

The short motif at 42-52 (PYPSGRLHMGH) is the 'HIGH' region element. Positions 622-626 (KMSKS) match the 'KMSKS' region motif. Position 625 (Lys-625) interacts with ATP.

It belongs to the class-I aminoacyl-tRNA synthetase family.

It localises to the cytoplasm. It carries out the reaction tRNA(Leu) + L-leucine + ATP = L-leucyl-tRNA(Leu) + AMP + diphosphate. The protein is Leucine--tRNA ligase of Shewanella denitrificans (strain OS217 / ATCC BAA-1090 / DSM 15013).